A 439-amino-acid chain; its full sequence is Adenylosuccinate synthetase (439 aa).

Residues 14–20 and 42–44 contribute to the GTP site; these read GDEGKGK and GHT. The Proton acceptor role is filled by aspartate 15. Aspartate 15 and glycine 42 together coordinate Mg(2+). Residues 15-18, 40-43, threonine 130, arginine 144, glutamine 225, threonine 240, and arginine 304 each bind IMP; these read DEGK and NAGH. Residue histidine 43 is the Proton donor of the active site. 300–306 serves as a coordination point for substrate; sequence TTTGRRR. Residues arginine 306, 332–334, and 414–416 each bind GTP; these read KLD and SLG.

Belongs to the adenylosuccinate synthetase family. In terms of assembly, homodimer. The cofactor is Mg(2+).

The protein resides in the cytoplasm. It catalyses the reaction IMP + L-aspartate + GTP = N(6)-(1,2-dicarboxyethyl)-AMP + GDP + phosphate + 2 H(+). It participates in purine metabolism; AMP biosynthesis via de novo pathway; AMP from IMP: step 1/2. In terms of biological role, plays an important role in the de novo pathway of purine nucleotide biosynthesis. Catalyzes the first committed step in the biosynthesis of AMP from IMP. This Prochlorococcus marinus (strain MIT 9303) protein is Adenylosuccinate synthetase.